Consider the following 115-residue polypeptide: Protein SPIRAL1-like 2 (115 aa).

The disordered stretch occupies residues Ala29–Lys48.

It belongs to the SPIRAL1 family.

Functionally, acts in maintaining the cortical microtubules organization essential for anisotropic cell growth. This is Protein SPIRAL1-like 2 from Oryza sativa subsp. japonica (Rice).